Reading from the N-terminus, the 257-residue chain is ATP synthase subunit a (257 aa).

6 helical membrane passes run 34–54 (ITNIGLYMTIAAFIAFYFSIL), 93–113 (YFPFMYTLFIFILINNLIGMV), 122–142 (HFILTFSLSFTVVLGATVLGF), 149–169 (FFSLFVPAGCPLGLLPLLVLI), 187–207 (ANILSGHMLLNILSGFTYNIM), and 210–230 (GIIFFILGLLPLAFIIAFSGL).

The protein belongs to the ATPase A chain family. In terms of assembly, F-type ATPases have 2 components, CF(1) - the catalytic core - and CF(0) - the membrane proton channel. CF(1) has five subunits: alpha(3), beta(3), gamma(1), delta(1), epsilon(1). CF(0) has three main subunits: a, b and c.

The protein resides in the mitochondrion inner membrane. Its function is as follows. Mitochondrial membrane ATP synthase (F(1)F(0) ATP synthase or Complex V) produces ATP from ADP in the presence of a proton gradient across the membrane which is generated by electron transport complexes of the respiratory chain. F-type ATPases consist of two structural domains, F(1) - containing the extramembraneous catalytic core and F(0) - containing the membrane proton channel, linked together by a central stalk and a peripheral stalk. During catalysis, ATP synthesis in the catalytic domain of F(1) is coupled via a rotary mechanism of the central stalk subunits to proton translocation. Key component of the proton channel; it may play a direct role in the translocation of protons across the membrane. The sequence is that of ATP synthase subunit a (ATP6) from Cochliobolus heterostrophus (Southern corn leaf blight fungus).